We begin with the raw amino-acid sequence, 283 residues long: Bifunctional protein FolD (283 aa).

NADP(+)-binding positions include 165–167 (GRG), Thr192, and Val233.

It belongs to the tetrahydrofolate dehydrogenase/cyclohydrolase family. In terms of assembly, homodimer.

It catalyses the reaction (6R)-5,10-methylene-5,6,7,8-tetrahydrofolate + NADP(+) = (6R)-5,10-methenyltetrahydrofolate + NADPH. The enzyme catalyses (6R)-5,10-methenyltetrahydrofolate + H2O = (6R)-10-formyltetrahydrofolate + H(+). Its pathway is one-carbon metabolism; tetrahydrofolate interconversion. Functionally, catalyzes the oxidation of 5,10-methylenetetrahydrofolate to 5,10-methenyltetrahydrofolate and then the hydrolysis of 5,10-methenyltetrahydrofolate to 10-formyltetrahydrofolate. The sequence is that of Bifunctional protein FolD from Thermobifida fusca (strain YX).